The following is a 249-amino-acid chain: Phosphomannomutase 1 (249 aa).

Asp-12 acts as the Nucleophile in catalysis. Asp-12 and Asp-14 together coordinate Mg(2+). The Proton donor/acceptor role is filled by Asp-14. Alpha-D-mannose 1-phosphate is bound by residues Arg-21, Arg-123, Arg-134, Arg-141, Ser-179, and Asp-181. Mg(2+) contacts are provided by Asp-209, Asp-223, and Thr-227.

Belongs to the eukaryotic PMM family. In terms of assembly, homodimer.

The protein resides in the cytoplasm. The catalysed reaction is alpha-D-mannose 1-phosphate = D-mannose 6-phosphate. Its pathway is nucleotide-sugar biosynthesis; GDP-alpha-D-mannose biosynthesis; alpha-D-mannose 1-phosphate from D-fructose 6-phosphate: step 2/2. Its function is as follows. Involved in the synthesis of the GDP-mannose and dolichol-phosphate-mannose required for a number of critical mannosyl transfer reactions. This Dictyostelium discoideum (Social amoeba) protein is Phosphomannomutase 1 (pmmA).